Here is an 868-residue protein sequence, read N- to C-terminus: MSDVTVRQLAGIVGIPLDRLLHQLGDAGLQISDADDVLSDAEKMKLLNHLRQSHGKVQESVTEPKRVTLQRRSVTELKQGTVPGKGAKTISVEVRKKRTYVKRSELPETSDRLSEAEQARRALEEQQQRELAEQEARRQQEEMLREQAAEEERRRQEEAARTAEERRRRDEEERQAAAERETVAAKPAPVAAPPIPRPAPEPRPPARPSAGKPKAEAPRAHPAERETEARGDKRSAGLSRKDEYRELQGDDFRKGGGKRKKPKTGRPMLMPEQKHGFEKPTAPIVYEVAVPESITVSDLAQRMSVKGVEVIKALMKMGVMATINQVLDQETAILVVEEMGHKAIAQKEDDLEAEIMANLAAEAEAPQLPRPPVVTIMGHVDHGKTSLLDYIRKSRVAAGEAGGITQHIGAYQVKTDHGSITFLDTPGHAAFTAMRARGAKVTDIVVLVVAADDGVMPQTREAVEHSRAAGVPLVVAMNKMDKADADPDRVKQELVGLNVVPEEWGGDVQFVPVSAKTGAGIDTLLDAILVQAEVLELKAPVAIPAAGVVLESKLEKGRGPVADILIQRGTLKKGDFLLCGKEIGRVRAMFNENGKPLKEAGPSAPIEVLGLSGAPEAGDEFIVVADERKAREIALHREEKLRSTKLAAQQAAKLEDVFSLMGSEETIDLNLVIKADVQGSLEALRSALTELSTDKVKVRVIGGGVGGISETDANLALASNAILIGFNVRADGSARKLIEERGIDLHYYSVIYNAIDEVKKSINGMLEPEFKEQIIGIAQVREVFRSSKFGTVAGCLVVEGHVRRNLPIRVLRDNVVIFEGQLESLRRFKDDVNEVKSGMECGIAVRNYNDVREGDQIEVFEKVQVAPH.

The span at 103 to 183 (RSELPETSDR…RQAAAERETV (81 aa)) shows a compositional bias: basic and acidic residues. A disordered region spans residues 103-274 (RSELPETSDR…GRPMLMPEQK (172 aa)). The span at 190–207 (VAAPPIPRPAPEPRPPAR) shows a compositional bias: pro residues. Over residues 213-254 (PKAEAPRAHPAERETEARGDKRSAGLSRKDEYRELQGDDFRK) the composition is skewed to basic and acidic residues. Positions 255–264 (GGGKRKKPKT) are enriched in basic residues. A tr-type G domain is found at 369–538 (PRPPVVTIMG…LVQAEVLELK (170 aa)). Residues 378–385 (GHVDHGKT) form a G1 region. GTP is bound at residue 378 to 385 (GHVDHGKT). Residues 403–407 (GITQH) are G2. Positions 424 to 427 (DTPG) are G3. GTP contacts are provided by residues 424 to 428 (DTPGH) and 478 to 481 (NKMD). Residues 478–481 (NKMD) form a G4 region. The interval 514 to 516 (SAK) is G5.

It belongs to the TRAFAC class translation factor GTPase superfamily. Classic translation factor GTPase family. IF-2 subfamily.

It is found in the cytoplasm. Functionally, one of the essential components for the initiation of protein synthesis. Protects formylmethionyl-tRNA from spontaneous hydrolysis and promotes its binding to the 30S ribosomal subunits. Also involved in the hydrolysis of GTP during the formation of the 70S ribosomal complex. The protein is Translation initiation factor IF-2 of Methylococcus capsulatus (strain ATCC 33009 / NCIMB 11132 / Bath).